A 243-amino-acid polypeptide reads, in one-letter code: Leucyl/phenylalanyl-tRNA--protein transferase (243 aa).

The protein belongs to the L/F-transferase family.

The protein resides in the cytoplasm. The enzyme catalyses N-terminal L-lysyl-[protein] + L-leucyl-tRNA(Leu) = N-terminal L-leucyl-L-lysyl-[protein] + tRNA(Leu) + H(+). It catalyses the reaction N-terminal L-arginyl-[protein] + L-leucyl-tRNA(Leu) = N-terminal L-leucyl-L-arginyl-[protein] + tRNA(Leu) + H(+). It carries out the reaction L-phenylalanyl-tRNA(Phe) + an N-terminal L-alpha-aminoacyl-[protein] = an N-terminal L-phenylalanyl-L-alpha-aminoacyl-[protein] + tRNA(Phe). Functions in the N-end rule pathway of protein degradation where it conjugates Leu, Phe and, less efficiently, Met from aminoacyl-tRNAs to the N-termini of proteins containing an N-terminal arginine or lysine. The chain is Leucyl/phenylalanyl-tRNA--protein transferase from Xylella fastidiosa (strain 9a5c).